The sequence spans 455 residues: Glutamate-1-semialdehyde 2,1-aminomutase (455 aa).

Lys-286 bears the N6-(pyridoxal phosphate)lysine mark.

This sequence belongs to the class-III pyridoxal-phosphate-dependent aminotransferase family. HemL subfamily. In terms of assembly, homodimer. Pyridoxal 5'-phosphate is required as a cofactor.

The protein resides in the cytoplasm. It catalyses the reaction (S)-4-amino-5-oxopentanoate = 5-aminolevulinate. It functions in the pathway porphyrin-containing compound metabolism; protoporphyrin-IX biosynthesis; 5-aminolevulinate from L-glutamyl-tRNA(Glu): step 2/2. The sequence is that of Glutamate-1-semialdehyde 2,1-aminomutase from Clavibacter sepedonicus (Clavibacter michiganensis subsp. sepedonicus).